The sequence spans 409 residues: MNKPKKVAILTAGGLAPCLSSAIGSLIERYTEIDPSIEIICYRSGYKGLLLGDSYAVTPKIRENAALLHKFGGSPIGNSRVKLTNVKDCIKRGLVQEGQDPQKVAADQLVKDGVDVLHTIGGDDTNTAAADLAAFLAKNDYGLTVIGLPKTIDNDVFPIKQSLGAWTAAEQGAQYFQNVVAEYNANPRMLIVHEVMGRNCGWLTAATAMEYRKLLDRSEWLPEIGLDRAAYEVHGVFVPEMEIDLAAEAKRLREVMDKVDCVNIFVSEGAGVDAIVAEMQAKGQEVPRDAFGHIKLDAVNPGKWFGEQFAEMIGAEKTLIQKSGYFARASASNVDDIRLIKSCADLAVECAFRRESGVIGHDEDNGNVLRAIEFPRIKGGKPFDIDTPWFVQMLAGIGQSKGARVEVSH.

Diphosphate is bound at residue glycine 14. Aspartate 123 contributes to the Mg(2+) binding site. Substrate-binding positions include threonine 151 to aspartate 153, methionine 196 to arginine 198, glutamate 268, and tyrosine 325 to arginine 328. Aspartate 153 (proton acceptor) is an active-site residue.

It belongs to the phosphofructokinase type A (PFKA) family. PPi-dependent PFK group II subfamily. Clade 'P' sub-subfamily. Homotetramer. Requires Mg(2+) as cofactor.

It is found in the cytoplasm. The enzyme catalyses beta-D-fructose 6-phosphate + diphosphate = beta-D-fructose 1,6-bisphosphate + phosphate + H(+). Its pathway is carbohydrate degradation; glycolysis; D-glyceraldehyde 3-phosphate and glycerone phosphate from D-glucose: step 3/4. With respect to regulation, non-allosteric. Its function is as follows. Catalyzes the phosphorylation of D-fructose 6-phosphate, the first committing step of glycolysis. Uses inorganic phosphate (PPi) as phosphoryl donor instead of ATP like common ATP-dependent phosphofructokinases (ATP-PFKs), which renders the reaction reversible, and can thus function both in glycolysis and gluconeogenesis. Consistently, PPi-PFK can replace the enzymes of both the forward (ATP-PFK) and reverse (fructose-bisphosphatase (FBPase)) reactions. The sequence is that of Pyrophosphate--fructose 6-phosphate 1-phosphotransferase from Methylotuvimicrobium alcaliphilum (strain DSM 19304 / NCIMB 14124 / VKM B-2133 / 20Z) (Methylomicrobium alcaliphilum).